We begin with the raw amino-acid sequence, 655 residues long: SRSF protein kinase 1 (655 aa).

The disordered stretch occupies residues 1–57 (MERKVLALQARKKRTKAKKDKAQRKSETQHRGSAPHSESDLPEQEEEILGSDDDEQE). The span at 10–22 (ARKKRTKAKKDKA) shows a compositional bias: basic residues. Acidic residues predominate over residues 40–57 (DLPEQEEEILGSDDDEQE). Phosphoserine; by CK2 is present on Ser-51. Residues 80–653 (YHVIRKLGWG…AAECLRHPWL (574 aa)) form the Protein kinase domain. ATP contacts are provided by residues 86–94 (LGWGHFSTV), Lys-109, and 166–168 (EVL). The active-site Proton acceptor is Asp-213. Disordered stretches follow at residues 238-341 (WQRS…QDQT) and 397-417 (FLSS…CTPI). Residues 265–276 (KNKKKKLKKKQK) are compositionally biased toward basic residues. 2 stretches are compositionally biased toward basic and acidic residues: residues 277-288 (RQAELLEKRMQE) and 304-318 (NKQE…RPLK). Ser-309, Ser-311, and Ser-333 each carry phosphoserine. At Ser-555 the chain carries Phosphoserine; by CK2.

Belongs to the protein kinase superfamily. CMGC Ser/Thr protein kinase family. In terms of assembly, monomer. Isoform 2 is found in a multisubunit complex containing seven proteins, named toposome, which separates entangled circular chromatin DNA during chromosome segregation. Isoform 2 interacts with DNAJC8 and AHSA1/AHA1 and this mediates formation of a complex with the Hsp70 /Hsp90 machinery. Isoform 1 is found in a complex with: DHX9, MOV10, MATR3, HNRNPU, NCL, DDX21, HSD17B4, PABPC1, HNRNPM, IGF2BP1, SYNCRIP, RPL3, VIM, YBX1, NPM1, HNRNPA2B1, HNRNPC, RPLP0, RPL7A and RALY. Isoform 2 binds to IGF2BP1, SYNCRIP, HNRNPA2B1 and HNRNPC. Isoform 1 and isoform 2 interact with SAFB which inhibits its activity. Isoform 2 interacts with SAFB2 which inhibits its activity. As to quaternary structure, (Microbial infection) Isoform 2 interacts with HHV-1 ICP27 protein. The cofactor is Mg(2+). Isoform 2 is predominantly expressed in the testis but is also present at lower levels in heart, ovary, small intestine, liver, kidney, pancreas and skeletal muscle. Isoform 1 is only seen in the testis, at lower levels than isoform 2. Highly expressed in different erythroid and lymphoid cell lines, with isoform 2 being far more abundant than isoform 1.

It is found in the cytoplasm. It localises to the nucleus. The protein resides in the nucleus matrix. Its subcellular location is the microsome. The protein localises to the nucleoplasm. It is found in the nucleus speckle. It localises to the chromosome. It carries out the reaction L-seryl-[protein] + ATP = O-phospho-L-seryl-[protein] + ADP + H(+). It catalyses the reaction L-threonyl-[protein] + ATP = O-phospho-L-threonyl-[protein] + ADP + H(+). With respect to regulation, activated by phosphorylation on Ser-51 and Ser-555. In terms of biological role, serine/arginine-rich protein-specific kinase which specifically phosphorylates its substrates at serine residues located in regions rich in arginine/serine dipeptides, known as RS domains and is involved in the phosphorylation of SR splicing factors and the regulation of splicing. Plays a central role in the regulatory network for splicing, controlling the intranuclear distribution of splicing factors in interphase cells and the reorganization of nuclear speckles during mitosis. Can influence additional steps of mRNA maturation, as well as other cellular activities, such as chromatin reorganization in somatic and sperm cells and cell cycle progression. Isoform 2 phosphorylates SFRS2, ZRSR2, LBR and PRM1. Isoform 2 phosphorylates SRSF1 using a directional (C-terminal to N-terminal) and a dual-track mechanism incorporating both processive phosphorylation (in which the kinase stays attached to the substrate after each round of phosphorylation) and distributive phosphorylation steps (in which the kinase and substrate dissociate after each phosphorylation event). The RS domain of SRSF1 binds first to a docking groove in the large lobe of the kinase domain of SRPK1. This induces certain structural changes in SRPK1 and/or RRM2 domain of SRSF1, allowing RRM2 to bind the kinase and initiate phosphorylation. The cycles continue for several phosphorylation steps in a processive manner (steps 1-8) until the last few phosphorylation steps (approximately steps 9-12). During that time, a mechanical stress induces the unfolding of the beta-4 motif in RRM2, which then docks at the docking groove of SRPK1. This also signals RRM2 to begin to dissociate, which facilitates SRSF1 dissociation after phosphorylation is completed. Isoform 2 can mediate hepatitis B virus (HBV) core protein phosphorylation. It plays a negative role in the regulation of HBV replication through a mechanism not involving the phosphorylation of the core protein but by reducing the packaging efficiency of the pregenomic RNA (pgRNA) without affecting the formation of the viral core particles. Isoform 1 and isoform 2 can induce splicing of exon 10 in MAPT/TAU. The ratio of isoform 1/isoform 2 plays a decisive role in determining cell fate in K-562 leukaemic cell line: isoform 2 favors proliferation where as isoform 1 favors differentiation. The polypeptide is SRSF protein kinase 1 (Homo sapiens (Human)).